A 185-amino-acid polypeptide reads, in one-letter code: Threonylcarbamoyl-AMP synthase (185 aa).

Residues 1-185 (MKNLNQVVDA…AKTGNTLRQG (185 aa)) enclose the YrdC-like domain.

Belongs to the SUA5 family. TsaC subfamily.

It is found in the cytoplasm. It carries out the reaction L-threonine + hydrogencarbonate + ATP = L-threonylcarbamoyladenylate + diphosphate + H2O. Its function is as follows. Required for the formation of a threonylcarbamoyl group on adenosine at position 37 (t(6)A37) in tRNAs that read codons beginning with adenine. Catalyzes the conversion of L-threonine, HCO(3)(-)/CO(2) and ATP to give threonylcarbamoyl-AMP (TC-AMP) as the acyladenylate intermediate, with the release of diphosphate. The polypeptide is Threonylcarbamoyl-AMP synthase (Aliivibrio fischeri (strain ATCC 700601 / ES114) (Vibrio fischeri)).